Here is a 154-residue protein sequence, read N- to C-terminus: Ribosome maturation factor RimP (154 aa).

This sequence belongs to the RimP family.

Its subcellular location is the cytoplasm. Functionally, required for maturation of 30S ribosomal subunits. The chain is Ribosome maturation factor RimP from Clostridium perfringens (strain SM101 / Type A).